Reading from the N-terminus, the 203-residue chain is Small ribosomal subunit protein uS5 (203 aa).

An S5 DRBM domain is found at 49-112 (FEERVVKIKR…KNANNNLIKV (64 aa)).

It belongs to the universal ribosomal protein uS5 family. In terms of assembly, part of the 30S ribosomal subunit. Contacts proteins S4 and S8.

Functionally, with S4 and S12 plays an important role in translational accuracy. In terms of biological role, located at the back of the 30S subunit body where it stabilizes the conformation of the head with respect to the body. The protein is Small ribosomal subunit protein uS5 of Ureaplasma parvum serovar 3 (strain ATCC 700970).